The following is a 414-amino-acid chain: Probable sugar phosphate/phosphate translocator At1g06470 (414 aa).

9 helical membrane passes run 72–92 (VLKT…LTLY), 101–121 (LGKF…QAVL), 172–192 (TFAT…AFAF), 197–217 (PSLK…LTVA), 224–244 (FWGF…WCMT), 259–279 (FIFM…LSLL), 303–323 (FLML…YVLV), 328–348 (AVTV…VAVF), and 354–374 (FTWL…LFNW). The EamA domain maps to 106-216 (APLLMNTIHF…VISAGVLLTV (111 aa)).

It belongs to the TPT transporter family. TPT (TC 2.A.7.9) subfamily.

The protein localises to the membrane. This chain is Probable sugar phosphate/phosphate translocator At1g06470, found in Arabidopsis thaliana (Mouse-ear cress).